We begin with the raw amino-acid sequence, 421 residues long: Lipid II:glycine glycyltransferase (421 aa).

It belongs to the FemABX family. As to quaternary structure, monomer.

It is found in the cytoplasm. It catalyses the reaction beta-D-GlcNAc-(1-&gt;4)-Mur2Ac(oyl-L-Ala-D-isoglutaminyl-L-Lys-D-Ala-D-Ala)-di-trans,octa-cis-undecaprenyl diphosphate + glycyl-tRNA(Gly) = beta-D-GlcNAc-(1-&gt;4)-Mur2Ac(oyl-L-Ala-D-isoglutaminyl-L-Lys-(N(6)-Gly)-D-Ala-D-Ala)-di-trans,octa-cis-undecaprenyl diphosphate + tRNA(Gly) + H(+). In terms of biological role, catalyzes the incorporation of the first glycine of the pentaglycine interpeptide bridge, which is characteristic of the S.aureus peptidoglycan. This glycine is added to the epsilon-amino group of the L-lysine of the membrane-bound lipid II intermediate (GlcNAc-(beta-1,4)-N-acetylmuramic acid(-L-Ala-D-iGln-L-Lys-D-Ala-D-Ala)-pyrophosphoryl-undecaprenol), using glycyl-tRNA(Gly) as donor, in a ribosome-independent mechanism. Involved in methicillin resistance. The chain is Lipid II:glycine glycyltransferase (femX) from Staphylococcus aureus (strain COL).